A 371-amino-acid polypeptide reads, in one-letter code: Putative F-box protein At1g58090 (371 aa).

Residues 1 to 46 form the F-box domain; that stretch reads MVSKKLPLDLEEEILFRVPPRSLVRFRSVCREWNTLFKNKRFINKN.

This chain is Putative F-box protein At1g58090, found in Arabidopsis thaliana (Mouse-ear cress).